The following is a 466-amino-acid chain: Sucrose-6-phosphate hydrolase (466 aa).

Substrate is bound by residues 38–41, Q57, 100–101, 159–160, and E218; these read LMND, YS, and RD. Residue D41 is part of the active site.

The protein belongs to the glycosyl hydrolase 32 family.

Its subcellular location is the cytoplasm. The enzyme catalyses Hydrolysis of terminal non-reducing beta-D-fructofuranoside residues in beta-D-fructofuranosides.. It participates in glycan biosynthesis; sucrose metabolism. Enables the bacterium to metabolize sucrose as a sole carbon source. The sequence is that of Sucrose-6-phosphate hydrolase (scrB) from Salmonella typhimurium.